Reading from the N-terminus, the 333-residue chain is Foldase protein PrsA (333 aa).

The first 22 residues, 1–22 (MKSAKQIATALLVGMFTFSAVG), serve as a signal peptide directing secretion. The N-palmitoyl cysteine moiety is linked to residue Cys-23. The S-diacylglycerol cysteine moiety is linked to residue Cys-23. In terms of domain architecture, PpiC spans 192–283 (PNTVHLAHIL…FGWHVIKCIK (92 aa)).

The protein belongs to the PrsA family.

The protein localises to the cell membrane. The catalysed reaction is [protein]-peptidylproline (omega=180) = [protein]-peptidylproline (omega=0). In terms of biological role, plays a major role in protein secretion by helping the post-translocational extracellular folding of several secreted proteins. The chain is Foldase protein PrsA from Clostridium acetobutylicum (strain ATCC 824 / DSM 792 / JCM 1419 / IAM 19013 / LMG 5710 / NBRC 13948 / NRRL B-527 / VKM B-1787 / 2291 / W).